Here is an 897-residue protein sequence, read N- to C-terminus: Alanine--tRNA ligase (897 aa).

Zn(2+) is bound by residues His-591, His-595, Cys-695, and His-699.

The protein belongs to the class-II aminoacyl-tRNA synthetase family. Zn(2+) serves as cofactor.

The protein resides in the cytoplasm. It catalyses the reaction tRNA(Ala) + L-alanine + ATP = L-alanyl-tRNA(Ala) + AMP + diphosphate. Catalyzes the attachment of alanine to tRNA(Ala) in a two-step reaction: alanine is first activated by ATP to form Ala-AMP and then transferred to the acceptor end of tRNA(Ala). Also edits incorrectly charged Ser-tRNA(Ala) and Gly-tRNA(Ala) via its editing domain. This Methanobrevibacter smithii (strain ATCC 35061 / DSM 861 / OCM 144 / PS) protein is Alanine--tRNA ligase.